The chain runs to 261 residues: Small ribosomal subunit protein eS1 (261 aa).

The span at 1-18 shows a compositional bias: basic residues; it reads MAVGKNKRISKGKKGGKK. Residues 1–20 form a disordered region; the sequence is MAVGKNKRISKGKKGGKKKA.

It belongs to the eukaryotic ribosomal protein eS1 family. Component of the small ribosomal subunit. Mature ribosomes consist of a small (40S) and a large (60S) subunit. The 40S subunit contains about 33 different proteins and 1 molecule of RNA (18S). The 60S subunit contains about 49 different proteins and 3 molecules of RNA (25S, 5.8S and 5S).

It is found in the cytoplasm. The polypeptide is Small ribosomal subunit protein eS1 (Catharanthus roseus (Madagascar periwinkle)).